The following is a 424-amino-acid chain: Envelope glycoprotein M (424 aa).

Topologically, residues 1–23 are intravirion; that stretch reads MASRARMERNYRGLSHIDYVHKK. Residues 24–44 traverse the membrane as a helical segment; that stretch reads MWVVQAVCFGIAVLVFFGTLV. Residues 45-94 are Virion surface-facing; the sequence is AASINLTEGFPCFFAAVVDYRTVNTTLVHTGLTYPRLGGVVPVLFFQTKA. The helical transmembrane segment at 95-115 threads the bilayer; sequence VVFFFYATSIVFVFLVCYITV. The Intravirion segment spans residues 116-143; sequence GAIISSKKHVGAAYMGSGAFVFSLMASP. The helical transmembrane segment at 144–164 threads the bilayer; the sequence is LTILLGTVSIWLLQAVVIVLA. Over 165-166 the chain is Virion surface; that stretch reads HK. The chain crosses the membrane as a helical span at residues 167–187; the sequence is LIVLAAAVYLVHFSTITFFYG. Over 188 to 226 the chain is Intravirion; it reads YFCGRGVDSKVYAEDISSAKDIDGSLHKLIGNVRAMMVN. The chain crosses the membrane as a helical span at residues 227–247; that stretch reads LLSIVYSIILIMSSLMFGMLL. Topologically, residues 248–261 are virion surface; sequence ANSFTLKFWHVIVT. Residues 262–282 form a helical membrane-spanning segment; that stretch reads VLITTSVLTLIYLLVIEFLIA. Arginine 283 is a topological domain (intravirion). Residues 284-304 form a helical membrane-spanning segment; sequence YVHIILGAYIGLLIGYGMLWT. At 305 to 327 the chain is on the virion surface side; it reads TTCDYVNRFYYAMGANASNLRIA. A helical transmembrane segment spans residues 328–348; the sequence is CHSVLAVFTVLILLAMVVRLI. Residues 349–424 lie on the Intravirion side of the membrane; the sequence is RASLYHRRRS…YSGSESEWDD (76 aa). The interval 382–424 is disordered; it reads SYKQRGSQSEDERALTQSRSAEASDEDTIYDRVYSGSESEWDD.

The protein belongs to the herpesviridae glycoprotein M family. As to quaternary structure, interacts (via N-terminus) with gN (via N-terminus). The gM-gN heterodimer forms the gCII complex.

It is found in the virion membrane. Its subcellular location is the host Golgi apparatus. It localises to the host trans-Golgi network. The protein localises to the host endosome membrane. The protein resides in the host nucleus inner membrane. Its function is as follows. Envelope glycoprotein important for virion assembly and egress. Plays a role in the correct incorporation of gH-gL into virion membrane. Directs the glycoprotein N (gN) to the host trans-Golgi network. This chain is Envelope glycoprotein M, found in Gallid herpesvirus 2 (strain Chicken/Md5/ATCC VR-987) (GaHV-2).